Reading from the N-terminus, the 755-residue chain is Dolichyl-phosphate-mannose--protein mannosyltransferase 4 (755 aa).

Residues 1–23 (MSQTLKKRGGNSSGRKSPTTSNI) are disordered. N-linked (GlcNAc...) asparagine glycosylation is present at asparagine 11. A compositionally biased stretch (polar residues) spans 13 to 23 (SGRKSPTTSNI). 6 helical membrane-spanning segments follow: residues 92 to 112 (FFDL…WLIG), 147 to 167 (IVPI…ACLF), 185 to 205 (ILLD…YSKF), 212 to 232 (SFSS…SCVI), 237 to 257 (VGVF…WILL), and 278 to 298 (ALII…FAIL). MIR domains follow at residues 325–389 (SKPV…IVPT), 396–454 (GTKV…LRLH), and 466–523 (KKEI…FDLI). Residue asparagine 445 is glycosylated (N-linked (GlcNAc...) asparagine). 3 consecutive transmembrane segments (helical) span residues 595–615 (IFFI…SIYI), 640–660 (LYNT…PFFL), and 670–690 (YLPA…FICS). Asparagine 691 carries N-linked (GlcNAc...) asparagine glycosylation. A helical membrane pass occupies residues 706–726 (YKIIAVVAACSTAIIWFFFYF).

The protein belongs to the glycosyltransferase 39 family. Forms a functional homodimer.

It is found in the endoplasmic reticulum membrane. It carries out the reaction a di-trans,poly-cis-dolichyl beta-D-mannosyl phosphate + L-seryl-[protein] = 3-O-(alpha-D-mannosyl)-L-seryl-[protein] + a di-trans,poly-cis-dolichyl phosphate + H(+). It catalyses the reaction a di-trans,poly-cis-dolichyl beta-D-mannosyl phosphate + L-threonyl-[protein] = 3-O-(alpha-D-mannosyl)-L-threonyl-[protein] + a di-trans,poly-cis-dolichyl phosphate + H(+). It participates in protein modification; protein glycosylation. In terms of biological role, protein mannosyltransferase (PMT) involved in hyphal growth and drug sensitivity. Transfers mannose from Dol-P-mannose to Ser or Thr residues on proteins. PMT1, PMT2 and PMT4 account for most of the protein-O-glycosylation activity, while PMT5 and PMT6 may specifically modulate a much narrower spectrum of target proteins. Accounts for the O-glycosylation of AXL2, responsible for bud site selection, as well as of the SEC20 t-SNARE component. O-glycosylation of SEC20 is essential for its stability. Required for biofilm formation. The protein is Dolichyl-phosphate-mannose--protein mannosyltransferase 4 of Candida albicans (strain SC5314 / ATCC MYA-2876) (Yeast).